Reading from the N-terminus, the 526-residue chain is Thioredoxin reductase 2, mitochondrial (526 aa).

The transit peptide at 1–36 (MAAIVAALRGSSGRFRPQTRVLTRGTRGAAGAASAA) directs the protein to the mitochondrion. 43-72 (DLLVIGGGSGGLACAKEAAQLGRKVAVADY) contributes to the FAD binding site. Lysine 81 carries the post-translational modification N6-succinyllysine. A disulfide bridge connects residues cysteine 88 and cysteine 93. Residues lysine 177 and lysine 331 each carry the N6-succinyllysine modification. Histidine 499 (proton acceptor) is an active-site residue. Residues 524 to 525 (CU) constitute a cross-link (cysteinyl-selenocysteine (Cys-Sec)). Position 525 (selenocysteine 525) is a non-standard amino acid, selenocysteine.

Belongs to the class-I pyridine nucleotide-disulfide oxidoreductase family. As to quaternary structure, homodimer. It depends on FAD as a cofactor. Expressed in liver, kidney, adrenal gland and heart.

The protein resides in the mitochondrion. It carries out the reaction [thioredoxin]-dithiol + NADP(+) = [thioredoxin]-disulfide + NADPH + H(+). Involved in the control of reactive oxygen species levels and the regulation of mitochondrial redox homeostasis. Maintains mitochondrial thioredoxin in a reduced state. May play a role in redox-regulated cell signaling. This chain is Thioredoxin reductase 2, mitochondrial (Txnrd2), found in Rattus norvegicus (Rat).